Reading from the N-terminus, the 446-residue chain is 3-phosphoshikimate 1-carboxyvinyltransferase (446 aa).

Positions 30, 31, and 35 each coordinate 3-phosphoshikimate. K30 is a phosphoenolpyruvate binding site. Phosphoenolpyruvate is bound by residues G112 and R140. Residues S186, S187, Q188, S215, E334, and H361 each coordinate 3-phosphoshikimate. Phosphoenolpyruvate is bound at residue Q188. E334 acts as the Proton acceptor in catalysis. Residues R365, R406, and K431 each coordinate phosphoenolpyruvate.

The protein belongs to the EPSP synthase family. In terms of assembly, monomer.

It localises to the cytoplasm. It carries out the reaction 3-phosphoshikimate + phosphoenolpyruvate = 5-O-(1-carboxyvinyl)-3-phosphoshikimate + phosphate. It functions in the pathway metabolic intermediate biosynthesis; chorismate biosynthesis; chorismate from D-erythrose 4-phosphate and phosphoenolpyruvate: step 6/7. Its function is as follows. Catalyzes the transfer of the enolpyruvyl moiety of phosphoenolpyruvate (PEP) to the 5-hydroxyl of shikimate-3-phosphate (S3P) to produce enolpyruvyl shikimate-3-phosphate and inorganic phosphate. The sequence is that of 3-phosphoshikimate 1-carboxyvinyltransferase from Streptomyces avermitilis (strain ATCC 31267 / DSM 46492 / JCM 5070 / NBRC 14893 / NCIMB 12804 / NRRL 8165 / MA-4680).